Reading from the N-terminus, the 182-residue chain is Isopentenyl-diphosphate Delta-isomerase (182 aa).

2 residues coordinate Mn(2+): His-25 and His-32. The 135-residue stretch at 30 to 164 folds into the Nudix hydrolase domain; the sequence is LLHLAFSSWL…PWAFSPWMVM (135 aa). Residue Cys-67 is part of the active site. Residue His-69 participates in Mn(2+) binding. Glu-87 is a binding site for Mg(2+). Mn(2+)-binding residues include Glu-114 and Glu-116. Glu-116 is a catalytic residue.

The protein belongs to the IPP isomerase type 1 family. In terms of assembly, homodimer. It depends on Mg(2+) as a cofactor. Requires Mn(2+) as cofactor.

It is found in the cytoplasm. It carries out the reaction isopentenyl diphosphate = dimethylallyl diphosphate. The protein operates within isoprenoid biosynthesis; dimethylallyl diphosphate biosynthesis; dimethylallyl diphosphate from isopentenyl diphosphate: step 1/1. Its function is as follows. Catalyzes the 1,3-allylic rearrangement of the homoallylic substrate isopentenyl (IPP) to its highly electrophilic allylic isomer, dimethylallyl diphosphate (DMAPP). The chain is Isopentenyl-diphosphate Delta-isomerase from Escherichia coli (strain SMS-3-5 / SECEC).